The chain runs to 204 residues: Large ribosomal subunit protein uL4 (204 aa).

Residues Arg-44 to Ser-76 are disordered.

It belongs to the universal ribosomal protein uL4 family. In terms of assembly, part of the 50S ribosomal subunit.

Functionally, one of the primary rRNA binding proteins, this protein initially binds near the 5'-end of the 23S rRNA. It is important during the early stages of 50S assembly. It makes multiple contacts with different domains of the 23S rRNA in the assembled 50S subunit and ribosome. In terms of biological role, forms part of the polypeptide exit tunnel. The polypeptide is Large ribosomal subunit protein uL4 (Gluconobacter oxydans (strain 621H) (Gluconobacter suboxydans)).